A 350-amino-acid polypeptide reads, in one-letter code: Deoxyhypusine synthase-like protein (350 aa).

Belongs to the deoxyhypusine synthase family.

The protein is Deoxyhypusine synthase-like protein of Chlorobaculum tepidum (strain ATCC 49652 / DSM 12025 / NBRC 103806 / TLS) (Chlorobium tepidum).